The sequence spans 545 residues: Dual specificity calcium/calmodulin-dependent 3',5'-cyclic nucleotide phosphodiesterase 1A (545 aa).

Calmodulin-binding stretches follow at residues 24–44 and 114–137; these read TEKM…QLEK and EKPK…MYRK. Residues 142-522 form the PDEase domain; the sequence is VGLTYPAAVI…ERWKELAAQG (381 aa). His-219 acts as the Proton donor in catalysis. Zn(2+) contacts are provided by His-223, His-259, Asp-260, and Asp-366. Asp-260 provides a ligand contact to Mg(2+). The interval 526-545 is disordered; the sequence is LHKNSEELGNTEEKHADTRP.

It belongs to the cyclic nucleotide phosphodiesterase family. PDE1 subfamily. Homodimer. Interacts with YWHAZ. The cofactor is Zn(2+). It depends on Mg(2+) as a cofactor. Expressed in brain, kidney and testis.

The protein resides in the cell projection. It is found in the cilium. It localises to the flagellum. The enzyme catalyses a nucleoside 3',5'-cyclic phosphate + H2O = a nucleoside 5'-phosphate + H(+). It catalyses the reaction 3',5'-cyclic GMP + H2O = GMP + H(+). The catalysed reaction is 3',5'-cyclic AMP + H2O = AMP + H(+). Type I PDE are activated by the binding of calmodulin in the presence of Ca(2+). Its activity is regulated as follows. Activated by the binding of calmodulin in the presence of Ca(2+). Its function is as follows. Calcium/calmodulin-dependent cyclic nucleotide phosphodiesterase with a dual specificity for the second messengers cGMP and cAMP, which are key regulators of many important physiological processes. Has a higher efficiency with cGMP compared to cAMP. This is Dual specificity calcium/calmodulin-dependent 3',5'-cyclic nucleotide phosphodiesterase 1A from Mus musculus (Mouse).